The primary structure comprises 328 residues: GTPase Obg (328 aa).

In terms of domain architecture, Obg spans 1–159 (MNFIDEVKIY…MWVQLSLKLL (159 aa)). Residues 160–327 (SDVGLVGLPN…IIKLALQTIK (168 aa)) enclose the OBG-type G domain. Residues 166–173 (GLPNAGKS), 191–195 (FTTLV), 212–215 (DIPG), 279–282 (NKID), and 308–310 (STY) contribute to the GTP site. Serine 173 and threonine 193 together coordinate Mg(2+).

It belongs to the TRAFAC class OBG-HflX-like GTPase superfamily. OBG GTPase family. As to quaternary structure, monomer. Requires Mg(2+) as cofactor.

The protein localises to the cytoplasm. Functionally, an essential GTPase which binds GTP, GDP and possibly (p)ppGpp with moderate affinity, with high nucleotide exchange rates and a fairly low GTP hydrolysis rate. Plays a role in control of the cell cycle, stress response, ribosome biogenesis and in those bacteria that undergo differentiation, in morphogenesis control. This is GTPase Obg from Rickettsia bellii (strain RML369-C).